The primary structure comprises 360 residues: UDP-N-acetylglucosamine--N-acetylmuramyl-(pentapeptide) pyrophosphoryl-undecaprenol N-acetylglucosamine transferase (360 aa).

The UDP-N-acetyl-alpha-D-glucosamine site is built by Ser-198 and Gln-289.

The protein belongs to the glycosyltransferase 28 family. MurG subfamily.

It is found in the cell membrane. The enzyme catalyses Mur2Ac(oyl-L-Ala-gamma-D-Glu-L-Lys-D-Ala-D-Ala)-di-trans,octa-cis-undecaprenyl diphosphate + UDP-N-acetyl-alpha-D-glucosamine = beta-D-GlcNAc-(1-&gt;4)-Mur2Ac(oyl-L-Ala-gamma-D-Glu-L-Lys-D-Ala-D-Ala)-di-trans,octa-cis-undecaprenyl diphosphate + UDP + H(+). Its pathway is cell wall biogenesis; peptidoglycan biosynthesis. Its function is as follows. Cell wall formation. Catalyzes the transfer of a GlcNAc subunit on undecaprenyl-pyrophosphoryl-MurNAc-pentapeptide (lipid intermediate I) to form undecaprenyl-pyrophosphoryl-MurNAc-(pentapeptide)GlcNAc (lipid intermediate II). The protein is UDP-N-acetylglucosamine--N-acetylmuramyl-(pentapeptide) pyrophosphoryl-undecaprenol N-acetylglucosamine transferase of Streptococcus pyogenes serotype M4 (strain MGAS10750).